A 365-amino-acid chain; its full sequence is Protein RecA (365 aa).

73-80 (GPESSGKT) is an ATP binding site.

The protein belongs to the RecA family.

Its subcellular location is the cytoplasm. Functionally, can catalyze the hydrolysis of ATP in the presence of single-stranded DNA, the ATP-dependent uptake of single-stranded DNA by duplex DNA, and the ATP-dependent hybridization of homologous single-stranded DNAs. It interacts with LexA causing its activation and leading to its autocatalytic cleavage. In Prochlorococcus marinus (strain AS9601), this protein is Protein RecA.